A 1437-amino-acid polypeptide reads, in one-letter code: IQ domain-containing protein N (1437 aa).

The IQ 1 domain maps to 84–112; sequence SRAATVIQASWKGYRLRQKLISQMTAAKA. 3 disordered regions span residues 332 to 353, 416 to 440, and 848 to 878; these read TSPT…SLSN, SQAQ…KPSP, and STGS…QNPR. Low complexity predominate over residues 422–440; that stretch reads TVSTSSKTSPSSPTVKPSP. Positions 861 to 878 are enriched in polar residues; it reads AQPQLHSHAPNKTMQNPR. IQ domains follow at residues 1190 to 1216, 1217 to 1239, 1240 to 1258, 1361 to 1389, and 1390 to 1413; these read QAVV…QWAT, IIQA…RATT, IIQA…ARQV, QHRA…SAAK, and MVQA…LGTG.

In terms of assembly, interacts with calmodulin. In terms of tissue distribution, expressed in testis, in elongating spermatids (at protein level).

Functionally, essential for spermiogenesis and fertilization. May be required for manchette assembly in elongating spermatids. This is IQ domain-containing protein N (Iqcn) from Mus musculus (Mouse).